Consider the following 85-residue polypeptide: LYR motif-containing protein 5A (85 aa).

Belongs to the complex I LYR family.

The sequence is that of LYR motif-containing protein 5A (lyrm5a) from Danio rerio (Zebrafish).